The sequence spans 337 residues: Methionyl-tRNA formyltransferase (337 aa).

Residue 116–119 (SILP) coordinates (6S)-5,6,7,8-tetrahydrofolate.

Belongs to the Fmt family.

The enzyme catalyses L-methionyl-tRNA(fMet) + (6R)-10-formyltetrahydrofolate = N-formyl-L-methionyl-tRNA(fMet) + (6S)-5,6,7,8-tetrahydrofolate + H(+). In terms of biological role, attaches a formyl group to the free amino group of methionyl-tRNA(fMet). The formyl group appears to play a dual role in the initiator identity of N-formylmethionyl-tRNA by promoting its recognition by IF2 and preventing the misappropriation of this tRNA by the elongation apparatus. In Desulfovibrio desulfuricans (strain ATCC 27774 / DSM 6949 / MB), this protein is Methionyl-tRNA formyltransferase.